Consider the following 461-residue polypeptide: Cysteine--tRNA ligase (461 aa).

Cysteine 28 provides a ligand contact to Zn(2+). The 'HIGH' region signature appears at 30 to 40 (ITVYDLCHIGH). The Zn(2+) site is built by cysteine 209, histidine 234, and glutamate 238. The short motif at 266–270 (KMSKS) is the 'KMSKS' region element. ATP is bound at residue lysine 269.

The protein belongs to the class-I aminoacyl-tRNA synthetase family. As to quaternary structure, monomer. It depends on Zn(2+) as a cofactor.

The protein localises to the cytoplasm. It carries out the reaction tRNA(Cys) + L-cysteine + ATP = L-cysteinyl-tRNA(Cys) + AMP + diphosphate. The protein is Cysteine--tRNA ligase of Pectobacterium carotovorum subsp. carotovorum (strain PC1).